The following is a 554-amino-acid chain: MFSVQRPPLTRTVVRMGLATLLPKTACLAGLNVALVFLLFQVQDGTGITLGPSKLDSKPTSLDSQQHVADKRWLATVGHYKHLAGATESTRDVSLLEERAQHRVNAQETNQRRTIFQRLLNLLRRRERDGEVSGSAADSSSRPRLSVRQRLAQLWRRAKSLFKRGIRRYFPQGRNRQRSLRAQRRRSELVFEKADSGCVIGKRILAHMQEQIGQPQALENSERLDRILTVAAWPPDVPKRFVSVTTGETRTLVRGAPLGSGGFATVYEATDVETNEELAVKVFMSEKEPTDETMLDLQRESSCYRNFSLAKTAKDAQESCRFMVPSDVVMLEGQPASTEVVIGLTTRWVPNYFLLMMRAEADMSKVISWVFGDASVNKSEFGLVVRMYLSSQAIKLVANVQAQGIVHTDIKPANFLLLKDGRLFLGDFGTYRINNSVGRAIGTPGYEPPERPFQATGITYTFPTDAWQLGITLYCIWCKERPTPADGIWDYLHFADCPSTPELVQDLIRSLLNRDPQKRMLPLQALETAAFKEMDSVVKGAAQNFEQQEHLHTE.

The chain crosses the membrane as a helical span at residues 17–40; it reads GLATLLPKTACLAGLNVALVFLLF. In terms of domain architecture, Protein kinase spans 252 to 531; sequence LVRGAPLGSG…PLQALETAAF (280 aa). G262, A264, and K281 together coordinate ATP. N306 is a glycosylation site (N-linked (GlcNAc...) asparagine). 3 residues coordinate ATP: M357, A359, and D362. Residue N377 is glycosylated (N-linked (GlcNAc...) asparagine). The Proton acceptor role is filled by D409. D427 is an ATP binding site. Residue D427 coordinates Mg(2+). N-linked (GlcNAc...) asparagine glycosylation occurs at N434. C478 and C497 are joined by a disulfide.

This sequence belongs to the protein kinase superfamily. Ser/Thr protein kinase family. Component of a complex at least composed of ROP18, GRA7 and ROP2. Component of a complex at least composed of ROP18 and ROP5. Interacts with GRA7 in the absence of ROP5. Interacts with mouse IRGB6 (TGTP1/TGTP2).

The protein localises to the parasitophorous vacuole membrane. It is found in the cytoplasmic vesicle. It localises to the secretory vesicle. Its subcellular location is the rhoptry. It catalyses the reaction L-threonyl-[protein] + ATP = O-phospho-L-threonyl-[protein] + ADP + H(+). The catalysed reaction is L-seryl-[protein] + ATP = O-phospho-L-seryl-[protein] + ADP + H(+). Kinase activity is enhanced by polymorphic pseudokinase ROP5. Its function is as follows. Protein kinase. Virulence factor. Mediates parasite survival in mouse macrophages and monocytes. Reduces the accumulation of mouse IRGA6 (IIGP1) and IRGB6 (TGTP1/TGTP2), immunity-related GTPases (IRGs) that protect mice from infection by certain intracellular pathogens, on the parasitophorous vacuole and IRG-mediated killing of parasites by mouse cells; probably in connection with ROP5. In complex with GRA7, targets IRGs to prevent IRG-mediated parasite killing by mouse cells. Phosphorylates mouse IRGA6 (IIGP1); its activity toward mouse IRGA6 is promoted by GRA7 or ROP5. Phosphorylates mouse IRGB6 (TGTP1/TGTP2). Phosphorylates mouse IRGB10 (GM12250). Does not affect IFN-gamma (IFNG)-mediated parasite killing in human cells that do not possess the large variety of IRGs. This is Serine/threonine-protein kinase ROP18 from Toxoplasma gondii.